A 359-amino-acid polypeptide reads, in one-letter code: MQNNKIIVGISGGVDSSVSALLLKQQGYDVTGVFMKNWEEDDTDEFCSAEQHIADAQAVCDSIGIPFKKINFAAEYWDNVFEHFLTEYKAGRTPNPDILCNKEIKFKAFLSYVHLLGGDYIATGHYARTKVIDDGSVQLVKGLDDSKDQTYFLYTLGQEQLKQTMFPIGDIEKSRVREIAKENNLVTFDKKDSTGICFIGERKFKDFLSKFLPAQKGEIHDENGIKIGMHDGLMYYTIGQRQGLGIGGVKNRPEIPWFAAQKDLENNVLIAVQGHDHPMLFKDTLQAIDLSWVAGSAPADSFRCSAKVRYRQKDQPCSVEVNNDGSVNVVFDEPQRAITPGQSVVFYDNDVCLGGGIII.

Residues 9–16 (GISGGVDS) and M35 contribute to the ATP site. Residues 95–97 (NPD) form an interaction with target base in tRNA region. The active-site Nucleophile is the C100. C100 and C197 are oxidised to a cystine. G124 is an ATP binding site. An interaction with tRNA region spans residues 147–149 (KDQ). Catalysis depends on C197, which acts as the Cysteine persulfide intermediate. The interaction with tRNA stretch occupies residues 309–310 (RY).

This sequence belongs to the MnmA/TRMU family.

It localises to the cytoplasm. The catalysed reaction is S-sulfanyl-L-cysteinyl-[protein] + uridine(34) in tRNA + AH2 + ATP = 2-thiouridine(34) in tRNA + L-cysteinyl-[protein] + A + AMP + diphosphate + H(+). Functionally, catalyzes the 2-thiolation of uridine at the wobble position (U34) of tRNA, leading to the formation of s(2)U34. In Francisella philomiragia subsp. philomiragia (strain ATCC 25017 / CCUG 19701 / FSC 153 / O#319-036), this protein is tRNA-specific 2-thiouridylase MnmA.